We begin with the raw amino-acid sequence, 75 residues long: Small ribosomal subunit protein bS16 (75 aa).

It belongs to the bacterial ribosomal protein bS16 family.

The polypeptide is Small ribosomal subunit protein bS16 (Aliarcobacter butzleri (strain RM4018) (Arcobacter butzleri)).